Here is a 329-residue protein sequence, read N- to C-terminus: GTPase Obg (329 aa).

In terms of domain architecture, Obg spans 1–159; the sequence is MQFIDYAEIE…RWLRLELKLL (159 aa). In terms of domain architecture, OBG-type G spans 160-328; sequence AEVGIIGLPN…LLQIVWQLLD (169 aa). GTP is bound by residues 166 to 173, 191 to 195, 213 to 216, 280 to 283, and 309 to 311; these read GLPNAGKS, FTTLV, DIPG, NKMD, and SGV. Positions 173 and 193 each coordinate Mg(2+).

Belongs to the TRAFAC class OBG-HflX-like GTPase superfamily. OBG GTPase family. Monomer. It depends on Mg(2+) as a cofactor.

Its subcellular location is the cytoplasm. Functionally, an essential GTPase which binds GTP, GDP and possibly (p)ppGpp with moderate affinity, with high nucleotide exchange rates and a fairly low GTP hydrolysis rate. Plays a role in control of the cell cycle, stress response, ribosome biogenesis and in those bacteria that undergo differentiation, in morphogenesis control. This Rippkaea orientalis (strain PCC 8801 / RF-1) (Cyanothece sp. (strain PCC 8801)) protein is GTPase Obg.